The primary structure comprises 137 residues: Oleosin Ara h 11.0101 (137 aa).

The residue at position 2 (Ala2) is an N-acetylalanine; alternate. 2 consecutive transmembrane segments (helical) span residues 27 to 47 (AVVA…GTVI) and 55 to 75 (LFVI…LLGL).

It belongs to the oleosin family. In terms of tissue distribution, expressed in seeds (at protein level).

The protein localises to the lipid droplet. Its subcellular location is the membrane. May have a structural role to stabilize the lipid body during desiccation of the seed by preventing coalescence of the oil. Probably interacts with both lipid and phospholipid moieties of lipid bodies. May also provide recognition signals for specific lipase anchorage in lipolysis during seedling growth. In Arachis hypogaea (Peanut), this protein is Oleosin Ara h 11.0101.